Reading from the N-terminus, the 333-residue chain is Fructose-1,6-bisphosphatase class 1 (333 aa).

Positions 92, 113, 115, and 116 each coordinate Mg(2+). Substrate contacts are provided by residues 116–119, Asn-209, Tyr-242, and Lys-272; that span reads DGSS. Glu-278 serves as a coordination point for Mg(2+).

Belongs to the FBPase class 1 family. As to quaternary structure, homotetramer. It depends on Mg(2+) as a cofactor.

Its subcellular location is the cytoplasm. It catalyses the reaction beta-D-fructose 1,6-bisphosphate + H2O = beta-D-fructose 6-phosphate + phosphate. It participates in carbohydrate biosynthesis; Calvin cycle. In Pelodictyon phaeoclathratiforme (strain DSM 5477 / BU-1), this protein is Fructose-1,6-bisphosphatase class 1.